Consider the following 51-residue polypeptide: MQKIDLGNNESLVCGVFPNQDGTFTAMTYTKSKTFKTETGARRWLEKHTVS.

To E.coli YdfA.

This is an uncharacterized protein from Escherichia coli O157:H7.